Consider the following 679-residue polypeptide: Methionine--tRNA ligase (679 aa).

The short motif at 15-25 (PYANGPIHLGH) is the 'HIGH' region element. 4 residues coordinate Zn(2+): cysteine 146, cysteine 149, cysteine 159, and cysteine 162. The 'KMSKS' region motif lies at 332–336 (KMSKS). ATP is bound at residue lysine 335. One can recognise a tRNA-binding domain in the interval 578 to 679 (DFAKIDLRIA…EGAQPGMKVK (102 aa)).

Belongs to the class-I aminoacyl-tRNA synthetase family. MetG type 1 subfamily. As to quaternary structure, homodimer. Zn(2+) is required as a cofactor.

It localises to the cytoplasm. It carries out the reaction tRNA(Met) + L-methionine + ATP = L-methionyl-tRNA(Met) + AMP + diphosphate. Functionally, is required not only for elongation of protein synthesis but also for the initiation of all mRNA translation through initiator tRNA(fMet) aminoacylation. The chain is Methionine--tRNA ligase from Shewanella halifaxensis (strain HAW-EB4).